Here is a 283-residue protein sequence, read N- to C-terminus: Lolitrem B biosynthesis cluster protein S (283 aa).

Residues Met-1–Gly-27 form the signal peptide. The next 5 membrane-spanning stretches (helical) occupy residues Trp-73–Leu-93, Leu-112–Ile-132, Ile-157–Leu-177, Met-219–Ala-239, and Val-250–Leu-270.

It belongs to the ltmS family.

The protein resides in the membrane. Part of the gene cluster that mediates the biosynthesis of lolitrems, indole-diterpene mycotoxins that are potent tremorgens in mammals, and are synthesized by clavicipitaceous fungal endophytes in association with their grass hosts. The geranylgeranyl diphosphate (GGPP) synthase ltmG is proposed to catalyze the first step in lolitrem biosynthesis. LtmG catalyzes a series of iterative condensations of isopentenyl diphosphate (IPP) with dimethylallyl diphosphate (DMAPP), geranyl diphosphate (GPP), and farnesyl diphosphate (FPP), to form GGPP. GGPP then condenses with indole-3-glycerol phosphate to form 3-geranylgeranylindole, an acyclic intermediate, to be incorporated into paxilline. Either ltmG or ltmC could be responsible for this step, as both are putative prenyl transferases. The FAD-dependent monooxygenase ltmM then catalyzes the epoxidation of the two terminal alkenes of the geranylgeranyl moiety, which is subsequently cyclized by ltmB, to paspaline. The cytochrome P450 monooxygenases ltmQ and ltmP can sequentially oxidize paspaline to terpendole E and terpendole F. Alternatively, ltmP converts paspaline to an intermediate which is oxidized by ltmQ to terpendole F. LtmF, ltmK, ltmE and ltmJ appear to be unique to the epichloe endophytes. The prenyltransferase ltmF is involved in the 27-hydroxyl-O-prenylation. The cytochrome P450 monooxygenase ltmK is required for the oxidative acetal ring formation. The multi-functional prenyltransferase ltmE is required for C20- and C21-prenylations of the indole ring of paspalanes and acts together with the cytochrome P450 monooxygenase ltmJ to yield lolitremanes by multiple oxidations and ring closures. The stereoisomer pairs of lolitriol and lolitrem N or lolitrem B and lolitrem F may be attributed to variations in the way in which ring closure can occur under the action of ltmJ. While the major product of this pathway is lolitrem B, the prenyl transferases and cytochrome P450 monooxygenases identified in this pathway have a remarkable versatility in their regio- and stereo-specificities to generate a diverse range of metabolites that are products of a metabolic grid rather than a linear pathway. The polypeptide is Lolitrem B biosynthesis cluster protein S (Epichloe festucae (strain Fl1)).